The following is a 38-amino-acid chain: DNA binding protein ORF8 (38 aa).

This sequence belongs to the microviridae J protein family.

It is found in the virion. The protein localises to the host cytoplasm. Mediates ssDNA packaging into virion, it locates to the internal surface of the capsid, thereby displacing the internal scaffolding protein during virion formation. Additionally, protein ORF8 plays a role in viral attachment to the host cell. This chain is DNA binding protein ORF8, found in Spiroplasma melliferum (SpV4).